The following is a 167-amino-acid chain: SAR-endolysin (167 aa).

A helical; Signal-anchor for type II membrane protein membrane pass occupies residues 11–31 (VIAAISGGAIAIASVLITGPG). Active-site proton donor/acceptor residues include Glu37 and Asp46.

Belongs to the glycosyl hydrolase 24 family.

It localises to the host cell inner membrane. It carries out the reaction Hydrolysis of (1-&gt;4)-beta-linkages between N-acetylmuramic acid and N-acetyl-D-glucosamine residues in a peptidoglycan and between N-acetyl-D-glucosamine residues in chitodextrins.. Functionally, signal-arrest-release (SAR) endolysin with lysozyme activity that degrades host peptidoglycans and participates with the pinholin and spanin proteins in the sequential events which lead to programmed host cell lysis releasing the mature viral particles. Once the pinholin has permeabilized the host cell membrane, the SAR-endolysin is released into the periplasm where it breaks down the peptidoglycan layer. This is SAR-endolysin (19) from Bacteriophage PS34.